The following is a 210-amino-acid chain: Na(+)-translocating NADH-quinone reductase subunit D (210 aa).

6 consecutive transmembrane segments (helical) span residues 9–29, 42–62, 72–92, 103–123, 131–151, and 178–198; these read SVLIGPIVSNNPIALQILGVC, LVMTIALTAVCALSNLFISLI, IIVQMTIIASLVIVVDQVLQA, VFVGLIITNCIVMGRAEAFAM, FMDGLGNGLGYGAILLSVGFV, and NGLLLLPPSAFFLIGALIWII.

The protein belongs to the NqrDE/RnfAE family. In terms of assembly, composed of six subunits; NqrA, NqrB, NqrC, NqrD, NqrE and NqrF.

It localises to the cell inner membrane. The enzyme catalyses a ubiquinone + n Na(+)(in) + NADH + H(+) = a ubiquinol + n Na(+)(out) + NAD(+). In terms of biological role, NQR complex catalyzes the reduction of ubiquinone-1 to ubiquinol by two successive reactions, coupled with the transport of Na(+) ions from the cytoplasm to the periplasm. NqrA to NqrE are probably involved in the second step, the conversion of ubisemiquinone to ubiquinol. This Shewanella piezotolerans (strain WP3 / JCM 13877) protein is Na(+)-translocating NADH-quinone reductase subunit D.